The primary structure comprises 191 residues: MITITEAAQNHFVKLLSSQPEGTQIRVFVANPGKPTAECGVSYCPADSVESADTHLKFNLFSVFVDPISAPYLNEAAIDFVTDELGSQLTLKAPNAKVRKVADDAPLIERVDYVLQSQINPQLANHGGRVTLMEITDDAFAVLQFGGGCNGCSMVDVTLKEGIEKELLQQFPELKGVKDLTEHQRGEHSFY.

[4Fe-4S] cluster is bound by residues Cys149 and Cys152.

The protein belongs to the NfuA family. As to quaternary structure, homodimer. [4Fe-4S] cluster serves as cofactor.

Its function is as follows. Involved in iron-sulfur cluster biogenesis. Binds a 4Fe-4S cluster, can transfer this cluster to apoproteins, and thereby intervenes in the maturation of Fe/S proteins. Could also act as a scaffold/chaperone for damaged Fe/S proteins. In Hamiltonella defensa subsp. Acyrthosiphon pisum (strain 5AT), this protein is Fe/S biogenesis protein NfuA.